A 106-amino-acid chain; its full sequence is Urease subunit beta (106 aa).

This sequence belongs to the urease beta subunit family. As to quaternary structure, heterotrimer of UreA (gamma), UreB (beta) and UreC (alpha) subunits. Three heterotrimers associate to form the active enzyme.

It is found in the cytoplasm. It carries out the reaction urea + 2 H2O + H(+) = hydrogencarbonate + 2 NH4(+). It participates in nitrogen metabolism; urea degradation; CO(2) and NH(3) from urea (urease route): step 1/1. This Klebsiella pneumoniae (strain 342) protein is Urease subunit beta.